Here is a 217-residue protein sequence, read N- to C-terminus: 3,4-dihydroxy-2-butanone 4-phosphate synthase (217 aa).

D-ribulose 5-phosphate contacts are provided by residues 37 to 38, Asp42, 150 to 154, and Glu174; these read RE and RRGHT. Mg(2+) is bound at residue Glu38. His153 serves as a coordination point for Mg(2+).

This sequence belongs to the DHBP synthase family. Homodimer. Requires Mg(2+) as cofactor. The cofactor is Mn(2+).

The catalysed reaction is D-ribulose 5-phosphate = (2S)-2-hydroxy-3-oxobutyl phosphate + formate + H(+). It functions in the pathway cofactor biosynthesis; riboflavin biosynthesis; 2-hydroxy-3-oxobutyl phosphate from D-ribulose 5-phosphate: step 1/1. Its function is as follows. Catalyzes the conversion of D-ribulose 5-phosphate to formate and 3,4-dihydroxy-2-butanone 4-phosphate. The sequence is that of 3,4-dihydroxy-2-butanone 4-phosphate synthase from Syntrophotalea carbinolica (strain DSM 2380 / NBRC 103641 / GraBd1) (Pelobacter carbinolicus).